The primary structure comprises 2035 residues: Ral GTPase-activating protein subunit alpha-1 (2035 aa).

Disordered stretches follow at residues 343 to 384 and 477 to 496; these read LVSR…SSLC and DGEKREEENGTSTSEHVRNS. The span at 345-365 shows a compositional bias: basic and acidic residues; the sequence is SREESKNDTVDKVDKSAEPEQ. 2 stretches are compositionally biased toward polar residues: residues 366–384 and 486–496; these read SHSNTSTLTEREPSSSSLC and GTSTSEHVRNS. Residues Ser710 and Ser720 each carry the phosphoserine modification. A disordered region spans residues 714–752; sequence SFSRGWSRDQPGQAPMRQRSATTTGSPGTEKARSIVRQK. The residue at position 753 (Thr753) is a Phosphothreonine. Position 772 is a phosphoserine (Ser772). Thr777 is subject to Phosphothreonine. Ser796 carries the post-translational modification Phosphoserine. The span at 807–817 shows a compositional bias: basic and acidic residues; sequence ERAKVNKEDTS. Disordered stretches follow at residues 807–834 and 848–911; these read ERAKVNKEDTSPKLPPLNSETGGNSANV and SGNA…SHSD. 2 stretches are compositionally biased toward polar residues: residues 824–833 and 849–862; these read NSETGGNSAN and GNASTMTRRGSSPG. 3 positions are modified to phosphoserine: Ser859, Ser860, and Ser863. A compositionally biased stretch (low complexity) spans 894 to 911; sequence SPASAGSSDLMSSDSHSD. Ser985, Ser989, Ser993, and Ser999 each carry phosphoserine. The segment covering 986-1008 has biased composition (polar residues); it reads ESASPVHSALGSRSQTPSPSTLS. Residues 986–1011 are disordered; the sequence is ESASPVHSALGSRSQTPSPSTLSRAH. The residue at position 1001 (Thr1001) is a Phosphothreonine. 2 positions are modified to phosphoserine: Ser1003 and Ser1477. The interval 1326–2035 is minimal domain that binds to TCF3/E12; the sequence is FTNKTVAHVA…YHHFPADADH (710 aa). A coiled-coil region spans residues 1713-1748; sequence SEKQENDVINAILKQYTEEKEFVEKHFNDLNMKASE. Residues 1795–2003 enclose the Rap-GAP domain; the sequence is LRNLDSRQCR…EERARYLQTI (209 aa).

Component of the heterodimeric RalGAP1 complex with RALGAPB. Heterodimerization is required for activity. Interacts with the HLH region of TCF3/isoform E12. As to expression, expressed during embryogenesis. Expressed in the adult brain, particularly in neurons of the cortex and hippocampus.

It localises to the cytoplasm. It is found in the nucleus. In terms of biological role, catalytic subunit of the heterodimeric RalGAP1 complex which acts as a GTPase activator for the Ras-like small GTPases RALA and RALB. May interact with the HLH region of TCF3/isoform E12. The sequence is that of Ral GTPase-activating protein subunit alpha-1 (Ralgapa1) from Mus musculus (Mouse).